Here is a 650-residue protein sequence, read N- to C-terminus: Acetyl-coenzyme A synthetase (650 aa).

Residues 191–194 (RGGR), Thr-311, and Asn-335 each bind CoA. ATP is bound by residues 387 to 389 (GEP), 411 to 416 (DTWWQT), Asp-500, and Arg-515. Residue Ser-523 participates in CoA binding. Position 526 (Arg-526) interacts with ATP. 3 residues coordinate Mg(2+): Val-537, His-539, and Val-542. Arg-584 contributes to the CoA binding site. Lys-609 is subject to N6-acetyllysine.

The protein belongs to the ATP-dependent AMP-binding enzyme family. Mg(2+) is required as a cofactor. In terms of processing, acetylated. Deacetylation by the SIR2-homolog deacetylase activates the enzyme.

The catalysed reaction is acetate + ATP + CoA = acetyl-CoA + AMP + diphosphate. Catalyzes the conversion of acetate into acetyl-CoA (AcCoA), an essential intermediate at the junction of anabolic and catabolic pathways. AcsA undergoes a two-step reaction. In the first half reaction, AcsA combines acetate with ATP to form acetyl-adenylate (AcAMP) intermediate. In the second half reaction, it can then transfer the acetyl group from AcAMP to the sulfhydryl group of CoA, forming the product AcCoA. This chain is Acetyl-coenzyme A synthetase, found in Shewanella sp. (strain MR-4).